Here is a 341-residue protein sequence, read N- to C-terminus: Heat-inducible transcription repressor HrcA (341 aa).

It belongs to the HrcA family.

In terms of biological role, negative regulator of class I heat shock genes (grpE-dnaK-dnaJ and groELS operons). Prevents heat-shock induction of these operons. The chain is Heat-inducible transcription repressor HrcA from Carboxydothermus hydrogenoformans (strain ATCC BAA-161 / DSM 6008 / Z-2901).